The primary structure comprises 324 residues: NADH-ubiquinone oxidoreductase chain 1 (324 aa).

8 helical membrane passes run 9-29, 75-95, 106-126, 146-166, 178-198, 212-232, 259-279, and 299-319; these read LINPLAYAVPVLIAVAFLTLV, ILFLTAPVLALILAMMLWAPM, LGILFIMAISSLAVYSILGSG, ISYEVSLGLILLSAVIFSGGY, TWLLLPLWPLAIMWFISTLAE, ELVSGFNVEYAAGPFALFFLA, ELMTISIATKTAMLSILFLWM, and FLPITLVLVLWHIALPIALAG.

This sequence belongs to the complex I subunit 1 family. In terms of assembly, core subunit of respiratory chain NADH dehydrogenase (Complex I) which is composed of 45 different subunits.

It localises to the mitochondrion inner membrane. It catalyses the reaction a ubiquinone + NADH + 5 H(+)(in) = a ubiquinol + NAD(+) + 4 H(+)(out). Its function is as follows. Core subunit of the mitochondrial membrane respiratory chain NADH dehydrogenase (Complex I) which catalyzes electron transfer from NADH through the respiratory chain, using ubiquinone as an electron acceptor. Essential for the catalytic activity and assembly of complex I. This Danio rerio (Zebrafish) protein is NADH-ubiquinone oxidoreductase chain 1 (mt-nd1).